A 372-amino-acid chain; its full sequence is Alpha-1,3-mannosyl-glycoprotein 4-beta-N-acetylglucosaminyltransferase-like protein MGAT4D (372 aa).

Topologically, residues 1–8 (MKTKNVNL) are cytoplasmic. The chain crosses the membrane as a helical; Signal-anchor for type II membrane protein span at residues 9–29 (LFALVAVLLFGFSCFCISRMN). Over 30-372 (QTNNQLINCR…REQHLKDHYY (343 aa)) the chain is Lumenal. N-linked (GlcNAc...) asparagine glycans are attached at residues N54 and N143.

Belongs to the glycosyltransferase 54 family. May self-associate; specifically in the endoplasmic reticulum prior to its translocation to the Golgi. Interacts with MGAT1, MGAT3 and MAN2A2; may interact with MGTA1 specifically in the Golgi. In terms of processing, N-glycosylated. O-glycosylated; further modified with terminal sialic acid residues. Testis.

It localises to the golgi apparatus membrane. Its subcellular location is the endoplasmic reticulum membrane. In terms of biological role, may play a role in male spermatogenesis. In vitro acts as inhibitor of MGAT1 activity causing cell surface proteins to carry mainly high mannose N-glycans. The function is mediated by its lumenal domain and occurs specifically in the Golgi. A catalytic glucosyltransferase activity is not detected. May be involved in regulation of Sertoli-germ cell interactions during specific stages of spermatogenesis. The chain is Alpha-1,3-mannosyl-glycoprotein 4-beta-N-acetylglucosaminyltransferase-like protein MGAT4D from Rattus norvegicus (Rat).